The primary structure comprises 507 residues: Keratin, type II cuticular Hb5 (507 aa).

The tract at residues 1–123 (MSCRSYRISS…PNAQCVKQEE (123 aa)) is head. The IF rod domain maps to 123–434 (EKEQIKSLNS…RLLEGEEHRL (312 aa)). The coil 1A stretch occupies residues 124-158 (KEQIKSLNSRFAAFIDKVRFLEQQNKLLETKWQFY). Positions 159 to 168 (QNQRCCESNL) are linker 1. A coil 1B region spans residues 169 to 269 (EPLFSGYIET…YEEEIRVLQA (101 aa)). Lys-229 is covalently cross-linked (Glycyl lysine isopeptide (Lys-Gly) (interchain with G-Cter in SUMO1)). The interval 270-286 (HISDTSVIVKMDNSRDL) is linker 12. The tract at residues 287–430 (NMDCIIAEIK…ATYRRLLEGE (144 aa)) is coil 2. The tract at residues 431 to 507 (EHRLCEGVGS…CGSSRSVRFA (77 aa)) is tail.

It belongs to the intermediate filament family. Heterotetramer of two type I and two type II keratins. In terms of tissue distribution, synthesis occurs immediately above a small population of matrix cells at the base of the hair bulb and the trichocytes lining the dermal papilla and extends upward through the matrix and ends in the lower part of the cortex of the hair shaft.

In Homo sapiens (Human), this protein is Keratin, type II cuticular Hb5 (KRT85).